Reading from the N-terminus, the 110-residue chain is MKGWLFLVIAIVGEVIATSALKSSEGFTKLAPSAVVIIGYGIAFYFLSLVLKSIPVGVAYAVWSGLGVVIITAIAWLLHGQKLDAWGFVGMGLIVSGVVVLNLLSKASAH.

The next 4 membrane-spanning stretches (helical) occupy residues 1-21, 30-50, 58-78, and 85-105; these read MKGWLFLVIAIVGEVIATSAL, LAPSAVVIIGYGIAFYFLSLV, VAYAVWSGLGVVIITAIAWLL, and AWGFVGMGLIVSGVVVLNLLS.

The protein belongs to the drug/metabolite transporter (DMT) superfamily. Small multidrug resistance (SMR) (TC 2.A.7.1) family.

The protein localises to the cell membrane. Its function is as follows. Multidrug exporter. Is implicated for the resistance to bacteriocidal quaternary ammonium compounds. This Escherichia coli protein is Quaternary ammonium compound-resistance protein QacE (qacE).